The chain runs to 196 residues: Large ribosomal subunit protein uL5 (196 aa).

Belongs to the universal ribosomal protein uL5 family. Part of the 50S ribosomal subunit; part of the 5S rRNA/L5/L18/L25 subcomplex. Contacts the 5S rRNA and the P site tRNA. Forms a bridge to the 30S subunit in the 70S ribosome.

Its function is as follows. This is one of the proteins that bind and probably mediate the attachment of the 5S RNA into the large ribosomal subunit, where it forms part of the central protuberance. In the 70S ribosome it contacts protein S13 of the 30S subunit (bridge B1b), connecting the 2 subunits; this bridge is implicated in subunit movement. Contacts the P site tRNA; the 5S rRNA and some of its associated proteins might help stabilize positioning of ribosome-bound tRNAs. The protein is Large ribosomal subunit protein uL5 of Chlorobium phaeobacteroides (strain BS1).